The sequence spans 208 residues: Thymidylate kinase (208 aa).

10–17 (GPEGSGKT) lines the ATP pocket.

It belongs to the thymidylate kinase family.

It carries out the reaction dTMP + ATP = dTDP + ADP. Phosphorylation of dTMP to form dTDP in both de novo and salvage pathways of dTTP synthesis. In Bacillus cereus (strain ATCC 14579 / DSM 31 / CCUG 7414 / JCM 2152 / NBRC 15305 / NCIMB 9373 / NCTC 2599 / NRRL B-3711), this protein is Thymidylate kinase.